We begin with the raw amino-acid sequence, 306 residues long: Methionyl-tRNA formyltransferase (306 aa).

Residue 108 to 111 (SLLP) participates in (6S)-5,6,7,8-tetrahydrofolate binding.

This sequence belongs to the Fmt family.

The catalysed reaction is L-methionyl-tRNA(fMet) + (6R)-10-formyltetrahydrofolate = N-formyl-L-methionyl-tRNA(fMet) + (6S)-5,6,7,8-tetrahydrofolate + H(+). Functionally, attaches a formyl group to the free amino group of methionyl-tRNA(fMet). The formyl group appears to play a dual role in the initiator identity of N-formylmethionyl-tRNA by promoting its recognition by IF2 and preventing the misappropriation of this tRNA by the elongation apparatus. The chain is Methionyl-tRNA formyltransferase from Arthrobacter sp. (strain FB24).